The sequence spans 283 residues: ATP synthase gamma chain (283 aa).

This sequence belongs to the ATPase gamma chain family. In terms of assembly, F-type ATPases have 2 components, CF(1) - the catalytic core - and CF(0) - the membrane proton channel. CF(1) has five subunits: alpha(3), beta(3), gamma(1), delta(1), epsilon(1). CF(0) has three main subunits: a, b and c.

Its subcellular location is the cell membrane. In terms of biological role, produces ATP from ADP in the presence of a proton gradient across the membrane. The gamma chain is believed to be important in regulating ATPase activity and the flow of protons through the CF(0) complex. This is ATP synthase gamma chain from Clostridium botulinum (strain Eklund 17B / Type B).